Consider the following 367-residue polypeptide: Deoxyhypusine synthase-like protein (367 aa).

Positions 1 to 23 (MKSLFQRRASKVRETEAMNAPVP) are disordered.

It belongs to the deoxyhypusine synthase family.

This is Deoxyhypusine synthase-like protein from Caulobacter vibrioides (strain ATCC 19089 / CIP 103742 / CB 15) (Caulobacter crescentus).